Here is a 48-residue protein sequence, read N- to C-terminus: uncharacterized protein (48 aa).

The segment at 1-20 is disordered; that stretch reads MLLKNWPSRRIQRDKSKRAG.

This is an uncharacterized protein from Bacillus subtilis (strain 168).